A 308-amino-acid polypeptide reads, in one-letter code: Pantothenate synthetase (308 aa).

39 to 46 (MGALHDGH) serves as a coordination point for ATP. His-46 (proton donor) is an active-site residue. (R)-pantoate is bound at residue Gln-71. Gln-71 contacts beta-alanine. ATP is bound at residue 157 to 160 (GEKD). Gln-163 is a binding site for (R)-pantoate. Residues Val-186 and 194–197 (MSSR) contribute to the ATP site. The tract at residues 286-308 (IETPAGTAGPDGDRQYAQSPWRN) is disordered.

This sequence belongs to the pantothenate synthetase family. As to quaternary structure, homodimer.

The protein resides in the cytoplasm. It carries out the reaction (R)-pantoate + beta-alanine + ATP = (R)-pantothenate + AMP + diphosphate + H(+). Its pathway is cofactor biosynthesis; (R)-pantothenate biosynthesis; (R)-pantothenate from (R)-pantoate and beta-alanine: step 1/1. In terms of biological role, catalyzes the condensation of pantoate with beta-alanine in an ATP-dependent reaction via a pantoyl-adenylate intermediate. The polypeptide is Pantothenate synthetase (Mycobacterium avium (strain 104)).